Consider the following 1035-residue polypeptide: Beta-galactosidase (1035 aa).

The substrate site is built by Asn-109 and Asp-208. Asp-208 is a binding site for Na(+). The Mg(2+) site is built by Glu-424, His-426, and Glu-469. Substrate-binding positions include Glu-469 and 545 to 548; that span reads EYAH. Glu-469 functions as the Proton donor in the catalytic mechanism. The active-site Nucleophile is the Glu-545. Asn-605 provides a ligand contact to Mg(2+). Residues Phe-609 and Asn-612 each coordinate Na(+). Substrate-binding residues include Asn-612 and Trp-1011.

It belongs to the glycosyl hydrolase 2 family. In terms of assembly, homotetramer. It depends on Mg(2+) as a cofactor. The cofactor is Na(+).

It catalyses the reaction Hydrolysis of terminal non-reducing beta-D-galactose residues in beta-D-galactosides.. The polypeptide is Beta-galactosidase (Klebsiella pneumoniae (strain 342)).